A 245-amino-acid polypeptide reads, in one-letter code: Rhamnogalacturonan acetylesterase (245 aa).

A signal peptide spans 1–17 (MKSIALTSLSLLPSALA). S26 (nucleophile) is an active-site residue. A disulfide bond links C100 and C108. Residues D204 and H207 contribute to the active site. C226 and C244 form a disulfide bridge.

Belongs to the 'GDSL' lipolytic enzyme family.

It localises to the secreted. It carries out the reaction Hydrolytic cleavage of 2-O-acetyl- or 3-O-acetyl groups of alpha-D-galacturonic acid in rhamnogalacturonan I.. Functionally, plays a key role in the degradation of rhamnogalacturonan in the cell wall. Involved in degradation of pectin. This is Rhamnogalacturonan acetylesterase from Emericella nidulans (strain FGSC A4 / ATCC 38163 / CBS 112.46 / NRRL 194 / M139) (Aspergillus nidulans).